The chain runs to 467 residues: Mothers against decapentaplegic homolog 2 (467 aa).

Ser-2 carries the post-translational modification N-acetylserine. Thr-8 carries the post-translational modification Phosphothreonine; by MAPK3. The region spanning 10–176 is the MH1 domain; sequence PVVKRLLGWK…YQRVETPVLP (167 aa). At Lys-19 the chain carries N6-acetyllysine. Zn(2+) contacts are provided by Cys-74, Cys-149, Cys-161, and His-166. A compositionally biased stretch (polar residues) spans 207-217; the sequence is PAGIEPQSNYI. The segment at 207 to 251 is disordered; sequence PAGIEPQSNYIPETPPPGYISEDGETSDQQLNQSMDTGSPAELSP. Thr-220 is modified (phosphothreonine). The short motif at 221-225 is the PY-motif element; sequence PPPGY. Residues 233–243 are compositionally biased toward polar residues; it reads SDQQLNQSMDT. Ser-240 carries the phosphoserine; by CAMK2 modification. 6 positions are modified to phosphoserine: Ser-245, Ser-250, Ser-255, Ser-458, Ser-460, and Ser-464. The region spanning 274-467 is the MH2 domain; the sequence is WCSIAYYELN…SPSVRCSSMS (194 aa). A phosphoserine; by TGFBR1 mark is found at Ser-465 and Ser-467.

The protein belongs to the dwarfin/SMAD family. Monomer; in the absence of TGF-beta. Heterodimer; in the presence of TGF-beta. Forms a heterodimer with co-SMAD, SMAD4, in the nucleus to form the transactivation complex SMAD2/SMAD4. Found in a complex with SMAD3 and TRIM33 upon addition of TGF-beta. Identified in a complex that contains at least ZNF451, SMAD2, SMAD3 and SMAD4. Interacts (via the MH2 domain) with ZFYVE9; may form trimers with the SMAD4 co-SMAD. Interacts with TAZ/WWRT1. Interacts with FOXH1. Interacts with SNW1. Interacts with CREB-binding protein (CBP) and EP300. Interacts with SNON. Interacts with ALK4/ACVR1B. Interacts with SKOR1. Interacts with SKOR2. Interacts with PRDM16. Interacts (via MH2 domain) with LEMD3. Interacts with RBPMS. Interacts with WWP1. Interacts (dephosphorylated form, via the MH1 and MH2 domains) with RANBP3 (via its C-terminal R domain); the interaction results in the export of dephosphorylated SMAD3 out of the nucleus and termination of the TGF-beta signaling. Interacts with PDPK1 (via PH domain). Interacts with DAB2; the interactions are enhanced upon TGF-beta stimulation. Interacts with USP15. Interacts with PPP5C. Interacts with LDLRAD4 (via the SMAD interaction motif). Interacts (via MH2 domain) with PMEPA1 (via the SMAD interaction motif). Interacts with ZFHX3. Interacts with ZNF451. Interacts with SMURF2 when phosphorylated on Ser-465/467. Interacts with PPM1A. Interacts with TGF-beta. Interacts with TGFBR1. Interacts with TGIF. Interacts with SMAD3 and TRIM33. Interacts with ZNF580. Interacts with NEDD4L in response to TGF-beta. Interacts with HGS. Interacts with AIP1. Interacts with WWP1. Interacts with PML. Interacts weakly with ZNF8. Interacts (when phosphorylated) with RNF111; RNF111 acts as an enhancer of the transcriptional responses by mediating ubiquitination and degradation of SMAD2 inhibitors. Interacts with YAP1 (when phosphorylated at 'Ser-127'). Interacts when phosphorylated with IPO7; the interaction facilitates translocation of SMAD2 to the nucleus. Interacts with MTMR4; negatively regulates TGF-beta signaling through SMAD2 dephosphorylation and retention in endosomes. Phosphorylated on one or several of Thr-220, Ser-245, Ser-250, and Ser-255. In response to TGF-beta, phosphorylated on Ser-465/467 by TGF-beta and activin type 1 receptor kinases. TGF-beta-induced Ser-465/467 phosphorylation declines progressively in a KMT5A-dependent manner. Able to interact with SMURF2 when phosphorylated on Ser-465/467, recruiting other proteins, such as SNON, for degradation. In response to decorin, the naturally occurring inhibitor of TGF-beta signaling, phosphorylated on Ser-240 by CaMK2. Phosphorylated by MAPK3 upon EGF stimulation; which increases transcriptional activity and stability, and is blocked by calmodulin. Phosphorylated by PDPK1. Post-translationally, in response to TGF-beta, ubiquitinated by NEDD4L; which promotes its degradation. Monoubiquitinated, leading to prevent DNA-binding. Deubiquitination by USP15 alleviates inhibition and promotes activation of TGF-beta target genes. Ubiquitinated by RNF111, leading to its degradation: only SMAD2 proteins that are 'in use' are targeted by RNF111, RNF111 playing a key role in activating SMAD2 and regulating its turnover. In terms of processing, acetylated on Lys-19 by coactivators in response to TGF-beta signaling, which increases transcriptional activity. Isoform short: Acetylation increases DNA binding activity in vitro and enhances its association with target promoters in vivo. Acetylation in the nucleus by EP300 is enhanced by TGF-beta. As to expression, expressed at high levels in skeletal muscle, endothelial cells, heart and placenta.

The protein resides in the cytoplasm. It is found in the nucleus. Its function is as follows. Receptor-regulated SMAD (R-SMAD) that is an intracellular signal transducer and transcriptional modulator activated by TGF-beta (transforming growth factor) and activin type 1 receptor kinases. Binds the TRE element in the promoter region of many genes that are regulated by TGF-beta and, on formation of the SMAD2/SMAD4 complex, activates transcription. Promotes TGFB1-mediated transcription of odontoblastic differentiation genes in dental papilla cells. Positively regulates PDPK1 kinase activity by stimulating its dissociation from the 14-3-3 protein YWHAQ which acts as a negative regulator. May act as a tumor suppressor in colorectal carcinoma. This chain is Mothers against decapentaplegic homolog 2 (SMAD2), found in Homo sapiens (Human).